Here is a 384-residue protein sequence, read N- to C-terminus: 4-hydroxy-3-methylbut-2-en-1-yl diphosphate synthase (flavodoxin) (384 aa).

Positions 280, 283, 315, and 322 each coordinate [4Fe-4S] cluster.

Belongs to the IspG family. Requires [4Fe-4S] cluster as cofactor.

The catalysed reaction is (2E)-4-hydroxy-3-methylbut-2-enyl diphosphate + oxidized [flavodoxin] + H2O + 2 H(+) = 2-C-methyl-D-erythritol 2,4-cyclic diphosphate + reduced [flavodoxin]. The protein operates within isoprenoid biosynthesis; isopentenyl diphosphate biosynthesis via DXP pathway; isopentenyl diphosphate from 1-deoxy-D-xylulose 5-phosphate: step 5/6. Converts 2C-methyl-D-erythritol 2,4-cyclodiphosphate (ME-2,4cPP) into 1-hydroxy-2-methyl-2-(E)-butenyl 4-diphosphate. The protein is 4-hydroxy-3-methylbut-2-en-1-yl diphosphate synthase (flavodoxin) of Frankia casuarinae (strain DSM 45818 / CECT 9043 / HFP020203 / CcI3).